The chain runs to 304 residues: UDP-3-O-acyl-N-acetylglucosamine deacetylase (304 aa).

Residues His-78, His-237, and Asp-241 each coordinate Zn(2+). The Proton donor role is filled by His-264.

This sequence belongs to the LpxC family. It depends on Zn(2+) as a cofactor.

The enzyme catalyses a UDP-3-O-[(3R)-3-hydroxyacyl]-N-acetyl-alpha-D-glucosamine + H2O = a UDP-3-O-[(3R)-3-hydroxyacyl]-alpha-D-glucosamine + acetate. It participates in glycolipid biosynthesis; lipid IV(A) biosynthesis; lipid IV(A) from (3R)-3-hydroxytetradecanoyl-[acyl-carrier-protein] and UDP-N-acetyl-alpha-D-glucosamine: step 2/6. Catalyzes the hydrolysis of UDP-3-O-myristoyl-N-acetylglucosamine to form UDP-3-O-myristoylglucosamine and acetate, the committed step in lipid A biosynthesis. This Polynucleobacter asymbioticus (strain DSM 18221 / CIP 109841 / QLW-P1DMWA-1) (Polynucleobacter necessarius subsp. asymbioticus) protein is UDP-3-O-acyl-N-acetylglucosamine deacetylase.